Here is a 251-residue protein sequence, read N- to C-terminus: uncharacterized protein (251 aa).

The segment at 229–251 (TSTETSPEHQADLKDDNSDISST) is disordered. Residues 234-245 (SPEHQADLKDDN) show a composition bias toward basic and acidic residues.

This is an uncharacterized protein from Acanthamoeba polyphaga (Amoeba).